Reading from the N-terminus, the 240-residue chain is Tubulin alpha chain (240 aa).

Position 17 (N17) interacts with GTP. E43 is an active-site residue.

The protein belongs to the tubulin family. Dimer of alpha and beta chains. A typical microtubule is a hollow water-filled tube with an outer diameter of 25 nm and an inner diameter of 15 nM. Alpha-beta heterodimers associate head-to-tail to form protofilaments running lengthwise along the microtubule wall with the beta-tubulin subunit facing the microtubule plus end conferring a structural polarity. Microtubules usually have 13 protofilaments but different protofilament numbers can be found in some organisms and specialized cells. The cofactor is Mg(2+). Post-translationally, undergoes a tyrosination/detyrosination cycle, the cyclic removal and re-addition of a C-terminal tyrosine residue by the enzymes tubulin tyrosine carboxypeptidase (TTCP) and tubulin tyrosine ligase (TTL), respectively.

It is found in the cytoplasm. The protein resides in the cytoskeleton. It carries out the reaction GTP + H2O = GDP + phosphate + H(+). Its function is as follows. Tubulin is the major constituent of microtubules, a cylinder consisting of laterally associated linear protofilaments composed of alpha- and beta-tubulin heterodimers. Microtubules grow by the addition of GTP-tubulin dimers to the microtubule end, where a stabilizing cap forms. Below the cap, tubulin dimers are in GDP-bound state, owing to GTPase activity of alpha-tubulin. This is Tubulin alpha chain from Octopus vulgaris (Common octopus).